Consider the following 83-residue polypeptide: Ferredoxin (83 aa).

2 4Fe-4S ferredoxin-type domains span residues 2–29 and 31–64; these read ALMI…QGDE and YVIE…KDPS. Positions 9, 12, 15, 19, 38, 41, 50, and 54 each coordinate [4Fe-4S] cluster.

[4Fe-4S] cluster is required as a cofactor.

Functionally, ferredoxins are iron-sulfur proteins that transfer electrons in a wide variety of metabolic reactions. This Allochromatium vinosum (strain ATCC 17899 / DSM 180 / NBRC 103801 / NCIMB 10441 / D) (Chromatium vinosum) protein is Ferredoxin (fdx).